The chain runs to 536 residues: CTP synthase (536 aa).

The amidoligase domain stretch occupies residues 1 to 267; that stretch reads MTKFIFVTGG…DDIVIKRLQL (267 aa). Serine 13 lines the CTP pocket. Serine 13 provides a ligand contact to UTP. ATP is bound at residue 14–19; the sequence is SLGKGI. Residue tyrosine 54 participates in L-glutamine binding. Aspartate 71 lines the ATP pocket. Residues aspartate 71 and glutamate 141 each coordinate Mg(2+). Residues 148–150, 188–193, and lysine 224 contribute to the CTP site; these read DIE and KTKPTQ. Residues 188-193 and lysine 224 contribute to the UTP site; that span reads KTKPTQ. 240 to 242 lines the ATP pocket; the sequence is RDA. One can recognise a Glutamine amidotransferase type-1 domain in the interval 293-535; the sequence is TIGLVGKYVS…IEASLKYQQN (243 aa). Residue glycine 355 coordinates L-glutamine. Cysteine 382 functions as the Nucleophile; for glutamine hydrolysis in the catalytic mechanism. L-glutamine contacts are provided by residues 383–386, glutamate 406, and arginine 463; that span reads LGMQ. Catalysis depends on residues histidine 508 and glutamate 510.

It belongs to the CTP synthase family. As to quaternary structure, homotetramer.

The catalysed reaction is UTP + L-glutamine + ATP + H2O = CTP + L-glutamate + ADP + phosphate + 2 H(+). It carries out the reaction L-glutamine + H2O = L-glutamate + NH4(+). The enzyme catalyses UTP + NH4(+) + ATP = CTP + ADP + phosphate + 2 H(+). The protein operates within pyrimidine metabolism; CTP biosynthesis via de novo pathway; CTP from UDP: step 2/2. With respect to regulation, allosterically activated by GTP, when glutamine is the substrate; GTP has no effect on the reaction when ammonia is the substrate. The allosteric effector GTP functions by stabilizing the protein conformation that binds the tetrahedral intermediate(s) formed during glutamine hydrolysis. Inhibited by the product CTP, via allosteric rather than competitive inhibition. In terms of biological role, catalyzes the ATP-dependent amination of UTP to CTP with either L-glutamine or ammonia as the source of nitrogen. Regulates intracellular CTP levels through interactions with the four ribonucleotide triphosphates. The chain is CTP synthase from Staphylococcus aureus (strain NCTC 8325 / PS 47).